Reading from the N-terminus, the 347-residue chain is Protein RecA (347 aa).

67-74 (GPESSGKT) contributes to the ATP binding site.

Belongs to the RecA family. The protein migrates as a 40 kDa protein in strains 69A and NCTC 11637. When overexpressed in E.coli a 38 kDa protein is made which is unable to complement the E.coli deletion mutant. It has been suggested this size difference is due to a post-translational modification.

It localises to the cytoplasm. In terms of biological role, can catalyze the hydrolysis of ATP in the presence of single-stranded DNA, the ATP-dependent uptake of single-stranded DNA by duplex DNA, and the ATP-dependent hybridization of homologous single-stranded DNAs. It interacts with LexA causing its activation and leading to its autocatalytic cleavage. Functionally, deletion of this gene leads to the inability of the bacteria to perform homologous recombination, and markedly increases UV sensitivity. This is Protein RecA from Helicobacter pylori (strain ATCC 700392 / 26695) (Campylobacter pylori).